We begin with the raw amino-acid sequence, 79 residues long: uncharacterized protein (79 aa).

A run of 2 helical transmembrane segments spans residues 18-38 (IWII…IVLI) and 50-70 (GITF…FFLF).

It is found in the host membrane. This is an uncharacterized protein from Spiroplasma virus SpV1-R8A2 B (SpV1).